We begin with the raw amino-acid sequence, 267 residues long: MKEQGLPAVNIIACASPLLCTTTSSDCVSVWACELEQPLSDALGKLKDHPVDLGPSTQLLTLRPGGPLPRVAVDLRKRVLDVVAAALLTALFAPLLLLAALAIKLESPGPALFRQTRGGLGGAPFQILKLRTMHCREDGPDVAQAQRGDDRVTRVGRILRAASIDELPQLLNVLRGDMSLVGPRPHATAHDDYYSARIPEYAARYQARPGLTGLAQVRGLRGGTETVELMRQRIAADIDYIQTWSLWRDLKIVLRTVPSLLTTDNAY.

Residues 83 to 103 form a helical membrane-spanning segment; sequence VAAALLTALFAPLLLLAALAI.

It belongs to the bacterial sugar transferase family.

Its subcellular location is the cell membrane. It carries out the reaction di-trans,octa-cis-undecaprenyl phosphate + UDP-alpha-D-glucose = alpha-D-glucosyl di-trans,octa-cis-undecaprenyl diphosphate + UMP. Its function is as follows. Is likely the initiating enzyme for holdfast polysaccharide synthesis. Catalyzes the transfer of the glucose-1-phosphate moiety from UDP-Glc onto the carrier lipid undecaprenyl phosphate (C55-P), forming a phosphoanhydride bond yielding to glucosyl-pyrophosphoryl-undecaprenol (Glc-PP-C55). Also possesses a weak galactose-1-P transferase activity. This Caulobacter vibrioides (strain ATCC 19089 / CIP 103742 / CB 15) (Caulobacter crescentus) protein is UDP-glucose:undecaprenyl-phosphate glucose-1-phosphate transferase (pssY).